The primary structure comprises 260 residues: Putative ATP-binding protein BruAb2_1123 (260 aa).

Residues 5–228 enclose the ABC transporter domain; it reads ISFNNVVMRY…DLPYPRTEAI (224 aa). 37-44 contributes to the ATP binding site; sequence GPSGCGKS.

It belongs to the ABC transporter superfamily. In terms of assembly, the complex is composed of two ATP-binding proteins (BruAb2_1123), two transmembrane proteins (BruAb2_1124) and a solute-binding protein (BruAb2_1122).

The protein localises to the cell inner membrane. Probably part of an ABC transporter complex. Probably Responsible for energy coupling to the transport system. The sequence is that of Putative ATP-binding protein BruAb2_1123 from Brucella abortus biovar 1 (strain 9-941).